We begin with the raw amino-acid sequence, 99 residues long: Aspartyl/glutamyl-tRNA(Asn/Gln) amidotransferase subunit C (99 aa).

Belongs to the GatC family. Heterotrimer of A, B and C subunits.

The enzyme catalyses L-glutamyl-tRNA(Gln) + L-glutamine + ATP + H2O = L-glutaminyl-tRNA(Gln) + L-glutamate + ADP + phosphate + H(+). It carries out the reaction L-aspartyl-tRNA(Asn) + L-glutamine + ATP + H2O = L-asparaginyl-tRNA(Asn) + L-glutamate + ADP + phosphate + 2 H(+). In terms of biological role, allows the formation of correctly charged Asn-tRNA(Asn) or Gln-tRNA(Gln) through the transamidation of misacylated Asp-tRNA(Asn) or Glu-tRNA(Gln) in organisms which lack either or both of asparaginyl-tRNA or glutaminyl-tRNA synthetases. The reaction takes place in the presence of glutamine and ATP through an activated phospho-Asp-tRNA(Asn) or phospho-Glu-tRNA(Gln). The chain is Aspartyl/glutamyl-tRNA(Asn/Gln) amidotransferase subunit C from Variovorax paradoxus (strain S110).